The sequence spans 334 residues: Holliday junction branch migration complex subunit RuvB (334 aa).

The large ATPase domain (RuvB-L) stretch occupies residues 4–184 (ADRIISASPQ…FGIVQRLEFY (181 aa)). ATP-binding positions include Ile-23, Arg-24, Gly-65, Lys-68, Thr-69, Thr-70, 131-133 (EDY), Arg-174, Tyr-184, and Arg-221. Thr-69 is a Mg(2+) binding site. Residues 185–255 (NVDDLTSIVK…IAKQALVMLD (71 aa)) are small ATPAse domain (RuvB-S). The interval 258–334 (PQGFDFMDIK…YAHLGISLSE (77 aa)) is head domain (RuvB-H). 3 residues coordinate DNA: Arg-294, Arg-313, and Arg-318.

This sequence belongs to the RuvB family. As to quaternary structure, homohexamer. Forms an RuvA(8)-RuvB(12)-Holliday junction (HJ) complex. HJ DNA is sandwiched between 2 RuvA tetramers; dsDNA enters through RuvA and exits via RuvB. An RuvB hexamer assembles on each DNA strand where it exits the tetramer. Each RuvB hexamer is contacted by two RuvA subunits (via domain III) on 2 adjacent RuvB subunits; this complex drives branch migration. In the full resolvosome a probable DNA-RuvA(4)-RuvB(12)-RuvC(2) complex forms which resolves the HJ.

The protein resides in the cytoplasm. The enzyme catalyses ATP + H2O = ADP + phosphate + H(+). Functionally, the RuvA-RuvB-RuvC complex processes Holliday junction (HJ) DNA during genetic recombination and DNA repair, while the RuvA-RuvB complex plays an important role in the rescue of blocked DNA replication forks via replication fork reversal (RFR). RuvA specifically binds to HJ cruciform DNA, conferring on it an open structure. The RuvB hexamer acts as an ATP-dependent pump, pulling dsDNA into and through the RuvAB complex. RuvB forms 2 homohexamers on either side of HJ DNA bound by 1 or 2 RuvA tetramers; 4 subunits per hexamer contact DNA at a time. Coordinated motions by a converter formed by DNA-disengaged RuvB subunits stimulates ATP hydrolysis and nucleotide exchange. Immobilization of the converter enables RuvB to convert the ATP-contained energy into a lever motion, pulling 2 nucleotides of DNA out of the RuvA tetramer per ATP hydrolyzed, thus driving DNA branch migration. The RuvB motors rotate together with the DNA substrate, which together with the progressing nucleotide cycle form the mechanistic basis for DNA recombination by continuous HJ branch migration. Branch migration allows RuvC to scan DNA until it finds its consensus sequence, where it cleaves and resolves cruciform DNA. The protein is Holliday junction branch migration complex subunit RuvB of Haemophilus ducreyi (strain 35000HP / ATCC 700724).